We begin with the raw amino-acid sequence, 1838 residues long: Lysine-specific demethylase 5 (1838 aa).

A disordered region spans residues 1–150 (MSAKTEADNT…SSNKFDQGKN (150 aa)). A compositionally biased stretch (gly residues) spans 15–31 (SGGGGVGSGTSSGGGAS). Low complexity predominate over residues 45-56 (RNSTGNGTNSGS). Positions 136–145 (HTQPHSSNKF) are enriched in polar residues. The 42-residue stretch at 161 to 202 (CPVFRPTTEEFKNPLAYISKIRSIAEKCGIAKILPPATWSPP) folds into the JmjN domain. The ARID domain occupies 226 to 316 (TRVKLNFLDQ…ILHPFEVYTS (91 aa)). Low complexity predominate over residues 321–333 (GPTPTSSGSGSTP). 2 disordered regions span residues 321 to 380 (GPTP…GLSG) and 416 to 437 (GSPL…KGGE). Thr323 is modified (phosphothreonine). 3 stretches are compositionally biased toward polar residues: residues 351–361 (TRQQIAPPNET), 369–380 (FGNSNASCGLSG), and 416–430 (GSPL…TRGA). The PHD-type 1 zinc-finger motif lies at 448-498 (KYICHICNRGDVEESMLLCDGCDDSYHTFCLLPPLTSIPKGEWLCPRCVVE). Positions 591–757 (EYAESSWNLN…MGRECVNHYS (167 aa)) constitute a JmjC domain. Fe cation-binding residues include His637, Asp640, and His725. Residues 960-1049 (VRTRSDHNQE…LRIELQQLDL (90 aa)) are a coiled coil. The segment at 1293-1354 (DMFCLCKSEF…KWLCPSCVRS (62 aa)) adopts a PHD-type 2 zinc-finger fold. The segment at 1401–1462 (SSPDVSAAQE…SDADDDDDED (62 aa)) is disordered. Residues 1407–1417 (AAQEAIMAQQQ) show a composition bias toward low complexity. A phosphoserine mark is found at Ser1422 and Ser1433. Residues 1453–1462 (SDADDDDDED) show a composition bias toward acidic residues. At Ser1474 the chain carries Phosphoserine. The interval 1548-1751 (YMQRQRQQHT…QRSQQAAQED (204 aa)) is disordered. Low complexity-rich tracts occupy residues 1576–1595 (NSPN…SNSG), 1624–1650 (GKKG…PGAD), 1658–1667 (ANGGNTNSST), 1674–1683 (SATTTPTPGS), and 1692–1736 (STTA…ATGG). Phosphoserine is present on residues Ser1635 and Ser1640. The PHD-type 3 zinc-finger motif lies at 1753–1808 (EEECRAENCHKPTGREVDWVQCDGGCNEWFHMYCVGLNRSQIKPDDDYICIRCTKT). The tract at residues 1814–1838 (QGSGHSMSVASTTTPGKQRAVQSAR) is disordered.

This sequence belongs to the JARID1 histone demethylase family. As to quaternary structure, interacts with Myc. Part of a complex containing Lid, Myc and Ash2. Fe(2+) serves as cofactor.

It localises to the nucleus. The catalysed reaction is N(6),N(6),N(6)-trimethyl-L-lysyl(4)-[histone H3] + 3 2-oxoglutarate + 3 O2 = L-lysyl(4)-[histone H3] + 3 formaldehyde + 3 succinate + 3 CO2. Its activity is regulated as follows. Inhibited by Myc. Histone demethylase that specifically demethylates 'Lys-4' of histone H3, thereby playing a central role in histone code. Does not demethylate histone H3 'Lys-9', H3 'Lys-27', H3 'Lys-36', H3 'Lys-79' or H4 'Lys-20'. Specifically demethylates trimethylated H3 'Lys-4'. Required for the correct regulation of homeotic genes during development. Plays a role in the regulation of the circadian rhythm and in maintaining the normal periodicity of the circadian clock. Regulates the expression of clock-controlled genes including tim, per and cry. This Drosophila melanogaster (Fruit fly) protein is Lysine-specific demethylase 5.